Reading from the N-terminus, the 82-residue chain is MPRKKTENFNFEASLNELTALVEKLEQGDLTLEESLQNFERGVGLVRSCQQALSDAEQKVKVLINQDGAETLVPFELETKTD.

Belongs to the XseB family. In terms of assembly, heterooligomer composed of large and small subunits.

The protein resides in the cytoplasm. It catalyses the reaction Exonucleolytic cleavage in either 5'- to 3'- or 3'- to 5'-direction to yield nucleoside 5'-phosphates.. Functionally, bidirectionally degrades single-stranded DNA into large acid-insoluble oligonucleotides, which are then degraded further into small acid-soluble oligonucleotides. The polypeptide is Exodeoxyribonuclease 7 small subunit (Coxiella burnetii (strain CbuG_Q212) (Coxiella burnetii (strain Q212))).